The sequence spans 116 residues: Selenoprotein H (116 aa).

The residue at position 20 (lysine 20) is an N6-acetyllysine. Positions 35-38 (CTSU) form a cross-link, cysteinyl-selenocysteine (Cys-Sec); redox-active. Selenocysteine 38 is a non-standard amino acid (selenocysteine).

It belongs to the SelWTH family.

Its function is as follows. May be involved in a redox-related process. This chain is Selenoprotein H, found in Mus musculus (Mouse).